The following is a 350-amino-acid chain: Biotin synthase (350 aa).

The 225-residue stretch at 54–278 (REIQLSTLLS…TMPQSYVRLS (225 aa)) folds into the Radical SAM core domain. [4Fe-4S] cluster-binding residues include Cys-69, Cys-73, and Cys-76. 4 residues coordinate [2Fe-2S] cluster: Cys-113, Cys-144, Cys-204, and Arg-276.

The protein belongs to the radical SAM superfamily. Biotin synthase family. In terms of assembly, homodimer. Requires [4Fe-4S] cluster as cofactor. [2Fe-2S] cluster serves as cofactor.

It carries out the reaction (4R,5S)-dethiobiotin + (sulfur carrier)-SH + 2 reduced [2Fe-2S]-[ferredoxin] + 2 S-adenosyl-L-methionine = (sulfur carrier)-H + biotin + 2 5'-deoxyadenosine + 2 L-methionine + 2 oxidized [2Fe-2S]-[ferredoxin]. It functions in the pathway cofactor biosynthesis; biotin biosynthesis; biotin from 7,8-diaminononanoate: step 2/2. Catalyzes the conversion of dethiobiotin (DTB) to biotin by the insertion of a sulfur atom into dethiobiotin via a radical-based mechanism. This Neisseria meningitidis serogroup C / serotype 2a (strain ATCC 700532 / DSM 15464 / FAM18) protein is Biotin synthase.